The primary structure comprises 25 residues: Caerin-2.4 (25 aa).

As to expression, expressed by the skin parotoid and/or rostral glands.

The protein resides in the secreted. Functionally, antibacterial peptide, that adopts an alpha helical conformation which can disrupt bacterial membranes. Each caerin displays a different antimicrobial specificity. This is Caerin-2.4 from Ranoidea caerulea (Green tree frog).